Consider the following 188-residue polypeptide: Potassium-transporting ATPase KdpC subunit (188 aa).

Residues 13-33 (MTAIFWIGCGLAYPLIFTGFA) form a helical membrane-spanning segment.

Belongs to the KdpC family. As to quaternary structure, the system is composed of three essential subunits: KdpA, KdpB and KdpC.

The protein resides in the cell inner membrane. In terms of biological role, part of the high-affinity ATP-driven potassium transport (or Kdp) system, which catalyzes the hydrolysis of ATP coupled with the electrogenic transport of potassium into the cytoplasm. This subunit acts as a catalytic chaperone that increases the ATP-binding affinity of the ATP-hydrolyzing subunit KdpB by the formation of a transient KdpB/KdpC/ATP ternary complex. The polypeptide is Potassium-transporting ATPase KdpC subunit (Gloeobacter violaceus (strain ATCC 29082 / PCC 7421)).